A 356-amino-acid polypeptide reads, in one-letter code: Phosphoribosyl pyrophosphate synthase-associated protein 1 (356 aa).

Methionine 1 carries the post-translational modification N-acetylmethionine. A phosphoserine mark is found at serine 177 and serine 215.

This sequence belongs to the ribose-phosphate pyrophosphokinase family. As to quaternary structure, binds to PRPS1 and PRPS2. As to expression, ubiquitous.

Functionally, seems to play a negative regulatory role in 5-phosphoribose 1-diphosphate synthesis. The polypeptide is Phosphoribosyl pyrophosphate synthase-associated protein 1 (Prpsap1) (Rattus norvegicus (Rat)).